Consider the following 117-residue polypeptide: Ig heavy chain V region MOO (117 aa).

Positions 1-116 (EVKLVESGGD…FGQGTIVTVS (116 aa)) constitute an Ig-like domain.

The polypeptide is Ig heavy chain V region MOO (Canis lupus familiaris (Dog)).